Consider the following 374-residue polypeptide: S-adenosylmethionine synthase 2 (374 aa).

Mg(2+) is bound at residue E11. Residue H17 participates in ATP binding. E45 contacts K(+). Residues E58 and Q101 each coordinate L-methionine. Residues 169–171, 237–240, D248, 254–255, A271, K275, and K279 contribute to the ATP site; these read DGK, SGRF, and RK. D248 lines the L-methionine pocket. K279 serves as a coordination point for L-methionine.

This sequence belongs to the AdoMet synthase family. As to quaternary structure, homotetramer. It depends on Mn(2+) as a cofactor. Requires Mg(2+) as cofactor. Co(2+) is required as a cofactor. K(+) serves as cofactor. In terms of tissue distribution, expressed in vegetative and reproductive tissues.

The protein resides in the cytoplasm. It catalyses the reaction L-methionine + ATP + H2O = S-adenosyl-L-methionine + phosphate + diphosphate. The protein operates within amino-acid biosynthesis; S-adenosyl-L-methionine biosynthesis; S-adenosyl-L-methionine from L-methionine: step 1/1. Functionally, catalyzes the formation of S-adenosylmethionine from methionine and ATP. The reaction comprises two steps that are both catalyzed by the same enzyme: formation of S-adenosylmethionine (AdoMet) and triphosphate, and subsequent hydrolysis of the triphosphate. This chain is S-adenosylmethionine synthase 2 (SAMS2), found in Pisum sativum (Garden pea).